The primary structure comprises 684 residues: Coiled-coil domain-containing protein 62 (684 aa).

Coiled-coil stretches lie at residues 11-160 and 199-322; these read RQNI…QALT and TCIV…ESKA. The tract at residues 579–603 is disordered; that stretch reads SLGSSKSALREDETESSSNKKNSPT. The segment covering 594–603 has biased composition (polar residues); that stretch reads SSSNKKNSPT. 2 short sequence motifs (LXXLL motif) span residues 634–638 and 650–654; these read LQRLL and LSTLL. A disordered region spans residues 657 to 684; the sequence is SHENLTGSATNKSEVPEESAQKNTFVSY. Residues 659-669 show a composition bias toward polar residues; it reads ENLTGSATNKS.

In terms of assembly, interacts with ESR1 and ESR2 in the presence of estradiol/E2. The interaction with ESR2 recruits CCDC62 to ER target genes, including cyclin-D1/CCND1 AP-1 promoter. Interacts with GOPC. As to expression, highly expressed in adult testis. Expressed in both prostate epithelial and stromal cells, with predominant expression in epithelial cells (at protein level). Not detected in prostate by RT-PCR. Overexpressed in various cancers.

It is found in the cytoplasm. It localises to the nucleus. The protein localises to the cytoplasmic vesicle. Its subcellular location is the secretory vesicle. The protein resides in the acrosome. Nuclear receptor coactivator that can enhance preferentially estrogen receptors ESR1 and ESR2 transactivation. Also modulates progesterone/PGR, glucocorticoid/NR3C1 and androgen/AR receptors transactivation, although at lower level; little effect on vitamin D receptor/VDR. Required for normal spermiogenesis. It probably plays a role in acrosome formation. This Homo sapiens (Human) protein is Coiled-coil domain-containing protein 62 (CCDC62).